Here is a 473-residue protein sequence, read N- to C-terminus: MPDEVVTRFAPSPTGFLHIGGARTALFNWLFARHAGGRMLLRIEDTDRERSTDAAIAAILDGLSWLGLHWDGDVIYQFQRVARHRDVALSLLEAGQAYYCYATPQELEEMREQARKEGRPPRYDGRWRDRAENDAPSGVKPVIRLKAPRDGETTLDDKVQGKVTWANKDLDDLVLLRSDGTPTYMLAVVVDDHDMGVTQIIRGDDHLTNAARQMQIYQALGWSVPIMAHIPLIHGADGAKLSKRHGALGVDAYRGMGYLPEALRNYLVRLGWSQGDKEFFSTEEMIEAFDLAHVGRSPARFDFAKLENMNGHYLRHADDRHLVDMLSTTLPFLPKGLELAPKFTDERKAQLLAAMPGLKERAKTLVELLDGANFLFAERPLELDAKAQALLDASSRAHIAALVPLFEAAPEWKASALEAIVRAYVAETGVKLGQVAQPLRAALTGRATSPGIFDVLEVLGRDEGLARLRDQAG.

The 'HIGH' region signature appears at 11-21; sequence PSPTGFLHIGG. A disordered region spans residues 111–132; that stretch reads REQARKEGRPPRYDGRWRDRAE. Residues 240 to 244 carry the 'KMSKS' region motif; that stretch reads KLSKR. K243 contributes to the ATP binding site.

Belongs to the class-I aminoacyl-tRNA synthetase family. Glutamate--tRNA ligase type 1 subfamily. As to quaternary structure, monomer.

The protein localises to the cytoplasm. It carries out the reaction tRNA(Glu) + L-glutamate + ATP = L-glutamyl-tRNA(Glu) + AMP + diphosphate. Its function is as follows. Catalyzes the attachment of glutamate to tRNA(Glu) in a two-step reaction: glutamate is first activated by ATP to form Glu-AMP and then transferred to the acceptor end of tRNA(Glu). The protein is Glutamate--tRNA ligase 1 of Beijerinckia indica subsp. indica (strain ATCC 9039 / DSM 1715 / NCIMB 8712).